Reading from the N-terminus, the 594-residue chain is Frizzled and smoothened-like protein A (594 aa).

Residues 1 to 22 (MVDIRKSLFFIIFFIFYNYVNS) form the signal peptide. Topologically, residues 23 to 248 (QKAINSDAFC…NEWYQFKDLT (226 aa)) are extracellular. Positions 27-173 (NSDAFCQKKT…SNYDLQCLNI (147 aa)) constitute an FZ domain. 2 disulfides stabilise this stretch: Cys-32/Cys-98 and Cys-41/Cys-91. 2 N-linked (GlcNAc...) asparagine glycosylation sites follow: Asn-55 and Asn-106. The cysteines at positions 117 and 170 are disulfide-linked. Asn-182, Asn-189, Asn-195, and Asn-206 each carry an N-linked (GlcNAc...) asparagine glycan. Residues 249–269 (TVTGVISFVCIFFNIFIYGFL) traverse the membrane as a helical segment. Over 270–277 (NKKHDRHT) the chain is Cytoplasmic. A helical membrane pass occupies residues 278–298 (IGILCLSFSLWCCMLSDLIVA). At 299-329 (SSPDYSLVCPEPGRFARIHDSRCVANGIIFQ) the chain is on the extracellular side. Residues 330 to 350 (WGAVCTTMFWSAMAIDLYLVI) form a helical membrane-spanning segment. Over 351-361 (KKLSLPAFTVK) the chain is Cytoplasmic. Residues 362-382 (YFVAAIFTLALLFTTVPLAWD) form a helical membrane-spanning segment. The Extracellular segment spans residues 383 to 403 (DYGYGFGGVGCWIMSNSVQNG). A helical transmembrane segment spans residues 404–424 (CFWIPMLICLLIGAVSICLII). At 425–448 (YEIVKVFKNVGRSGISIILANARL) the chain is on the cytoplasmic side. A helical transmembrane segment spans residues 449–469 (FGIVSFIFIEYIYLFVYHFWV). Topologically, residues 470-507 (QENTEKFTQNITDWVICVQTTGSSDGCPLPKAVPYATQ) are extracellular. Asn-479 is a glycosylation site (N-linked (GlcNAc...) asparagine). Residues 508 to 528 (FIFLFFLRLLGIEVCIFYGIN) form a helical membrane-spanning segment. Residues 529–594 (SRSKNIILES…SKNGGDDDDL (66 aa)) lie on the Cytoplasmic side of the membrane.

This sequence belongs to the G-protein coupled receptor Fz/Smo family.

Its subcellular location is the membrane. This Dictyostelium discoideum (Social amoeba) protein is Frizzled and smoothened-like protein A (fslA).